Here is a 287-residue protein sequence, read N- to C-terminus: Protease HtpX homolog (287 aa).

2 helical membrane-spanning segments follow: residues 5–25 and 28–48; these read IRTG…GYWI and GAGA…AYWV. Histidine 131 provides a ligand contact to Zn(2+). Residue glutamate 132 is part of the active site. Histidine 135 is a binding site for Zn(2+). Transmembrane regions (helical) follow at residues 146–166 and 174–194; these read VTAT…FFGG and PFAG…ATLV. Residue glutamate 203 coordinates Zn(2+).

It belongs to the peptidase M48B family. Requires Zn(2+) as cofactor.

It localises to the cell inner membrane. This chain is Protease HtpX homolog, found in Acidiphilium cryptum (strain JF-5).